The following is a 280-amino-acid chain: Myelin proteolipid protein A (280 aa).

The Cytoplasmic segment spans residues methionine 1–cysteine 10. S-palmitoyl cysteine attachment occurs at residues cysteine 7 and cysteine 10. A helical transmembrane segment spans residues methionine 11–glycine 36. At histidine 37 to glutamate 59 the chain is on the extracellular side. A helical transmembrane segment spans residues tyrosine 60 to alanine 88. At glutamate 89–lysine 152 the chain is on the cytoplasmic side. Residues cysteine 140 and cysteine 142 are each lipidated (S-palmitoyl cysteine). The helical transmembrane segment at phenylalanine 153–phenylalanine 179 threads the bilayer. Topologically, residues asparagine 180–histidine 239 are extracellular. Cystine bridges form between cysteine 185–cysteine 229 and cysteine 202–cysteine 221. Residues leucine 240–leucine 269 traverse the membrane as a helical segment. Topologically, residues arginine 270 to phenylalanine 280 are cytoplasmic.

Belongs to the myelin proteolipid protein family.

It is found in the cell membrane. This is the major myelin protein from the central nervous system. It plays an important role in the formation or maintenance of the multilamellar structure of myelin. This Xenopus laevis (African clawed frog) protein is Myelin proteolipid protein A (plp1-a).